Here is a 290-residue protein sequence, read N- to C-terminus: S-methyl-5'-thioadenosine phosphorylase 2 (290 aa).

Phosphate-binding positions include Ser-14, 57–58, and 90–91; these read RH and SA. Residue Met-185 coordinates substrate. Ser-186 is a phosphate binding site. 209–211 provides a ligand contact to substrate; it reads DYD.

Belongs to the PNP/MTAP phosphorylase family. MTAP subfamily. In terms of assembly, homotrimer.

Its subcellular location is the cytoplasm. It localises to the nucleus. The enzyme catalyses S-methyl-5'-thioadenosine + phosphate = 5-(methylsulfanyl)-alpha-D-ribose 1-phosphate + adenine. Its pathway is amino-acid biosynthesis; L-methionine biosynthesis via salvage pathway; S-methyl-5-thio-alpha-D-ribose 1-phosphate from S-methyl-5'-thioadenosine (phosphorylase route): step 1/1. Its function is as follows. Catalyzes the reversible phosphorylation of S-methyl-5'-thioadenosine (MTA) to adenine and 5-methylthioribose-1-phosphate. Involved in the breakdown of MTA, a major by-product of polyamine biosynthesis. Responsible for the first step in the methionine salvage pathway after MTA has been generated from S-adenosylmethionine. Has broad substrate specificity with 6-aminopurine nucleosides as preferred substrates. This chain is S-methyl-5'-thioadenosine phosphorylase 2, found in Puccinia graminis f. sp. tritici (strain CRL 75-36-700-3 / race SCCL) (Black stem rust fungus).